Reading from the N-terminus, the 275-residue chain is Large ribosomal subunit protein uL2cz (275 aa).

Disordered stretches follow at residues 1–20 (MAIH…AVDS) and 225–275 (NPVD…RRSK).

It belongs to the universal ribosomal protein uL2 family. As to quaternary structure, part of the 50S ribosomal subunit.

Its subcellular location is the plastid. The protein localises to the chloroplast. The sequence is that of Large ribosomal subunit protein uL2cz (rpl2-A) from Populus alba (White poplar).